The chain runs to 832 residues: Vacuolar transmembrane transporter penV (832 aa).

Transmembrane regions (helical) follow at residues 39–59 (LYTQ…AFCI) and 117–137 (FFKF…AIIL). The interval 152-171 (WDNPPGNKTTSPIDGSEKEK) is disordered. Residue asparagine 158 is glycosylated (N-linked (GlcNAc...) asparagine). Residues 178–198 (YLWIYVLFAYVFSGLAIYMLL) form a helical membrane-spanning segment. A glycan (N-linked (GlcNAc...) asparagine) is linked at asparagine 214. Residues 291-322 (NDGNALPLTEQQPRDADDERSGLLSGHDNEHV) are disordered. A compositionally biased stretch (basic and acidic residues) spans 302–321 (QPRDADDERSGLLSGHDNEH). 9 helical membrane-spanning segments follow: residues 434–454 (FVIG…ASLL), 483–503 (GLPT…YEWL), 524–544 (FFFS…ASGF), 560–582 (TIAL…LLIL), 587–608 (LFPF…FLSA), 623–645 (FSYG…YSVF), 650–672 (LICL…QLLY), 687–707 (MICN…IGVL), and 713–733 (ITRS…SYWF). Positions 754–777 (PGGGDISPSPSSTLSPPSGLDRDS) are disordered. The span at 759-771 (ISPSPSSTLSPPS) shows a compositional bias: low complexity.

This sequence belongs to the CSC1 (TC 1.A.17) family.

The protein resides in the vacuole membrane. Functionally, vacuolar transmembrane transporter that participates in the first stage of the beta-lactam biosynthesis (the formation of the ACV tripeptide), probably taking part in the supply of amino acids from the vacuolar lumen to the vacuole-anchored ACV synthetase. The polypeptide is Vacuolar transmembrane transporter penV (Penicillium rubens (strain ATCC 28089 / DSM 1075 / NRRL 1951 / Wisconsin 54-1255) (Penicillium chrysogenum)).